The sequence spans 560 residues: uncharacterized protein (560 aa).

The N-terminal stretch at 1 to 29 (MKSALKKSVVSTSISLILASGMAAFAAHA) is a signal peptide. Asp66, Asp67, and Ser132 together coordinate Ca(2+). Residue Ser132 is the Nucleophile of the active site. A 3-oxoalanine (Ser) modification is found at Ser132. Residue His185 is part of the active site. Ca(2+) is bound by residues Asp345 and Asn346.

Belongs to the sulfatase family. Requires Ca(2+) as cofactor. In terms of processing, the conversion to 3-oxoalanine (also known as C-formylglycine, FGly), of a serine or cysteine residue in prokaryotes and of a cysteine residue in eukaryotes, is critical for catalytic activity.

This is an uncharacterized protein from Escherichia coli (strain K12).